The chain runs to 613 residues: MPDYRSKTSTHGRNMAGARALWRATGMKDDDFKKPIIAIANSFTQFVPGHVHLKDLGQLVAREIERAGGVAKEFNTIAVDDGIAMGHDGMLYSLPSREIIADSVEYMVNAHCADAIVCISNCDKITPGMLMAALRLNIPVIFVSGGPMEAGKTKLASHGLDLVDAMVIAADSSASDEKVAEYERSACPTCGSCSGMFTANSMNCLTEALGLALPGNGSTLATHSDREELFLRAGRTIVELCQRYYGDNDESVLPRNIANFKAFENAMTLDIAMGGSTNTILHLLAAAQEAEIDFDLRDIDRLSRHVPQLCKVAPNIQKYHMEDVHRAGGIFSILGELARGGLLHTDLPTVHSKTMAEGIAQWDITQTSDEAVHHFFKAGPAGIPTQTAFSQSTRWDSLDDDRENGCIRSVEHAYSKEGGLAVLYGNIALDGCVVKTAGVDESIHVFEGNAKIFESQDSAVRGILADEVKEGDIVIIRYEGPKGGPGMQEMLYPTSYLKSKGLGKACALLTDGRFSGGTSGLSIGHASPEAAAGGTIGLVQDGDKVLIDIPNRSINLLVSDEELAARRVEQDKKGWKPVEARPRKVTTALKAYALLATSADKGAVRNKAMLDGL.

Residue Asp-81 participates in Mg(2+) binding. Cys-122 serves as a coordination point for [2Fe-2S] cluster. Positions 123 and 124 each coordinate Mg(2+). Residue Lys-124 is modified to N6-carboxylysine. Cys-193 contributes to the [2Fe-2S] cluster binding site. Glu-489 serves as a coordination point for Mg(2+). Ser-515 functions as the Proton acceptor in the catalytic mechanism.

It belongs to the IlvD/Edd family. Homodimer. Requires [2Fe-2S] cluster as cofactor. Mg(2+) is required as a cofactor.

The catalysed reaction is (2R)-2,3-dihydroxy-3-methylbutanoate = 3-methyl-2-oxobutanoate + H2O. It carries out the reaction (2R,3R)-2,3-dihydroxy-3-methylpentanoate = (S)-3-methyl-2-oxopentanoate + H2O. It participates in amino-acid biosynthesis; L-isoleucine biosynthesis; L-isoleucine from 2-oxobutanoate: step 3/4. Its pathway is amino-acid biosynthesis; L-valine biosynthesis; L-valine from pyruvate: step 3/4. Functionally, functions in the biosynthesis of branched-chain amino acids. Catalyzes the dehydration of (2R,3R)-2,3-dihydroxy-3-methylpentanoate (2,3-dihydroxy-3-methylvalerate) into 2-oxo-3-methylpentanoate (2-oxo-3-methylvalerate) and of (2R)-2,3-dihydroxy-3-methylbutanoate (2,3-dihydroxyisovalerate) into 2-oxo-3-methylbutanoate (2-oxoisovalerate), the penultimate precursor to L-isoleucine and L-valine, respectively. This chain is Dihydroxy-acid dehydratase, found in Pseudomonas fluorescens (strain ATCC BAA-477 / NRRL B-23932 / Pf-5).